Reading from the N-terminus, the 407-residue chain is MEIILGVVMFTLIVLVLSGLILAARSKLVNAGDVVIEINNEADKQIRTPAGDKLLNTLSSNGIFVSSACGGGGSCGQCRVTVKEGGGDILPTELSHITKRDAKAGCRLACQVAVKQNMKIELPEEIFGVKKWECEVISNDNKATFIKELKLRIPEGEVVPFRAGGYIQIECPPHKVAYADFDVPDEYRSDWDKFNLFRYVSEVKEPTLRAYSMANYPEEKGIIMLNVRIATPPPKVPDAPPGIMSSYIWSLKPGDKVTISGPFGEFFAKETDAEMVFIGGGAGMAPMRSHIFDQLKRLHSTRKISFWYGARSLREMFYDEEFEQLARDNPNFTFHVALSDPLPEDNWTGHTGFIHNVLYENYLRDHPAPEDCEFYMCGPPVMNAAVIKMLKDLGVEDENILLDDFGG.

The chain crosses the membrane as a helical span at residues 3 to 23; sequence IILGVVMFTLIVLVLSGLILA. Positions 32 to 126 constitute a 2Fe-2S ferredoxin-type domain; the sequence is GDVVIEINNE…NMKIELPEEI (95 aa). Positions 69, 75, 78, and 110 each coordinate [2Fe-2S] cluster. The FAD-binding FR-type domain occupies 129-269; the sequence is VKKWECEVIS…SGPFGEFFAK (141 aa).

Belongs to the NqrF family. In terms of assembly, composed of six subunits; NqrA, NqrB, NqrC, NqrD, NqrE and NqrF. [2Fe-2S] cluster is required as a cofactor. FAD serves as cofactor.

It localises to the cell inner membrane. It catalyses the reaction a ubiquinone + n Na(+)(in) + NADH + H(+) = a ubiquinol + n Na(+)(out) + NAD(+). Its function is as follows. NQR complex catalyzes the reduction of ubiquinone-1 to ubiquinol by two successive reactions, coupled with the transport of Na(+) ions from the cytoplasm to the periplasm. The first step is catalyzed by NqrF, which accepts electrons from NADH and reduces ubiquinone-1 to ubisemiquinone by a one-electron transfer pathway. This is Na(+)-translocating NADH-quinone reductase subunit F from Klebsiella pneumoniae subsp. pneumoniae (strain ATCC 700721 / MGH 78578).